The chain runs to 93 residues: MRTVPLFAACLLLTLMAQAEPLPRAADHSDTKMKGDREDHVAVISFWEEESTSLQDAGAGAGRRCICTTRTCRFPYRRLGTCIFQNRVYTFCC.

An N-terminal signal peptide occupies residues 1–19; sequence MRTVPLFAACLLLTLMAQA. Positions 20–62 are excised as a propeptide; it reads EPLPRAADHSDTKMKGDREDHVAVISFWEEESTSLQDAGAGAG. Cystine bridges form between Cys-65–Cys-93, Cys-67–Cys-82, and Cys-72–Cys-92.

The protein belongs to the alpha-defensin family. In terms of tissue distribution, bone marrow.

The protein localises to the secreted. Has antibiotic, anti-fungi and antiviral activity. The chain is Neutrophil cationic peptide 1 type B from Cavia porcellus (Guinea pig).